The following is a 527-amino-acid chain: Low-affinity Na(+)/H(+) antiporter NhaS1 (527 aa).

Transmembrane regions (helical) follow at residues 18–38 (FLIVLSVSLSIATLSKTVPIL), 41–61 (IPYTLLLVIVGMALAFVDVKL), 94–114 (WFPITLFATLGVVICVVGIAF), 126–146 (IAFLAAAALSATDPVSVIALF), 169–189 (VAVVVFLILVGIPLGTSTFDL), 196–216 (FVTVIGIGVGCGLVIGFSLSL), 240–260 (ILAENLGGSGVIGVVVVGMVL), 276–296 (IVSIFWEFVAFFVNSIIFLLI), 311–331 (LILIAIAAVVVTRLVSVFGLS), 352–372 (TVLWWGGLRGSVAIAVALSVP), and 380–400 (AIIDIVFGVVLFTLLVQGLTT).

This sequence belongs to the monovalent cation:proton antiporter 1 (CPA1) transporter (TC 2.A.36) family.

It localises to the cell membrane. Functionally, na(+)/H(+) antiporter that extrudes sodium in exchange for external protons. Might be able to function at relatively high concentrations of Na(+) ions. Also has Li(+)/H(+) antiport activity under K(+)-rich conditions, but it might not have any physiological relevance. This Synechocystis sp. (strain ATCC 27184 / PCC 6803 / Kazusa) protein is Low-affinity Na(+)/H(+) antiporter NhaS1 (nhaS1).